Here is a 274-residue protein sequence, read N- to C-terminus: 2,3,4,5-tetrahydropyridine-2,6-dicarboxylate N-succinyltransferase (274 aa).

2 residues coordinate substrate: Arg103 and Asp140.

The protein belongs to the transferase hexapeptide repeat family. Homotrimer.

It is found in the cytoplasm. The catalysed reaction is (S)-2,3,4,5-tetrahydrodipicolinate + succinyl-CoA + H2O = (S)-2-succinylamino-6-oxoheptanedioate + CoA. It participates in amino-acid biosynthesis; L-lysine biosynthesis via DAP pathway; LL-2,6-diaminopimelate from (S)-tetrahydrodipicolinate (succinylase route): step 1/3. The polypeptide is 2,3,4,5-tetrahydropyridine-2,6-dicarboxylate N-succinyltransferase (Haemophilus ducreyi (strain 35000HP / ATCC 700724)).